Here is a 206-residue protein sequence, read N- to C-terminus: Urease accessory protein UreE (206 aa).

Residues 136–206 (PEGGAYAEPS…HGHAHAHDRK (71 aa)) are disordered. 2 stretches are compositionally biased toward basic and acidic residues: residues 148 to 169 (QGHD…GGHE) and 177 to 191 (HGHA…EHCG). A compositionally biased stretch (basic residues) spans 192–206 (HGHHHHGHAHAHDRK).

This sequence belongs to the UreE family.

The protein localises to the cytoplasm. Functionally, involved in urease metallocenter assembly. Binds nickel. Probably functions as a nickel donor during metallocenter assembly. This is Urease accessory protein UreE from Bradyrhizobium sp. (strain BTAi1 / ATCC BAA-1182).